The primary structure comprises 188 residues: Ribosome maturation factor RimM (188 aa).

Positions 93 to 166 constitute a PRC barrel domain; it reads EDEYYDHQLI…RAVIDPPPGL (74 aa).

It belongs to the RimM family. As to quaternary structure, binds ribosomal protein uS19.

It is found in the cytoplasm. Functionally, an accessory protein needed during the final step in the assembly of 30S ribosomal subunit, possibly for assembly of the head region. Essential for efficient processing of 16S rRNA. May be needed both before and after RbfA during the maturation of 16S rRNA. It has affinity for free ribosomal 30S subunits but not for 70S ribosomes. The polypeptide is Ribosome maturation factor RimM (Streptomyces coelicolor (strain ATCC BAA-471 / A3(2) / M145)).